The following is a 266-amino-acid chain: Inositol-1-monophosphatase (266 aa).

4 residues coordinate Mg(2+): glutamate 69, aspartate 86, leucine 88, and aspartate 89. Substrate is bound at residue glutamate 69. Substrate contacts are provided by residues 88 to 91 (LDGT), arginine 185, and aspartate 214. Aspartate 214 provides a ligand contact to Mg(2+).

It belongs to the inositol monophosphatase superfamily. Mg(2+) serves as cofactor.

The catalysed reaction is a myo-inositol phosphate + H2O = myo-inositol + phosphate. This Mesorhizobium japonicum (strain LMG 29417 / CECT 9101 / MAFF 303099) (Mesorhizobium loti (strain MAFF 303099)) protein is Inositol-1-monophosphatase (suhB).